The sequence spans 470 residues: Argininosuccinate lyase (470 aa).

Belongs to the lyase 1 family. Argininosuccinate lyase subfamily.

It localises to the cytoplasm. The enzyme catalyses 2-(N(omega)-L-arginino)succinate = fumarate + L-arginine. It participates in amino-acid biosynthesis; L-arginine biosynthesis; L-arginine from L-ornithine and carbamoyl phosphate: step 3/3. This Mycobacterium sp. (strain JLS) protein is Argininosuccinate lyase.